Consider the following 466-residue polypeptide: Histidine--tRNA ligase (466 aa).

The protein belongs to the class-II aminoacyl-tRNA synthetase family. In terms of assembly, homodimer.

The protein resides in the cytoplasm. The enzyme catalyses tRNA(His) + L-histidine + ATP = L-histidyl-tRNA(His) + AMP + diphosphate + H(+). The chain is Histidine--tRNA ligase from Xylella fastidiosa (strain M23).